The primary structure comprises 855 residues: MAAAAVGGRGERLSSSSPTAAAPQVDAGKYVRYTPEQVEALERVYTECPKPSSLRRQQLIRECPILSNIEPKQIKVWFQNRRCREKQRKEASRLQTVNRKLNAMNKLLMEENDRLQKQVSRLVYENGYMRTQLHNPSAATTDTSCESVVTSGQHHQQQNPAVLHPQRDANNPAGLLAIAEETLAEFMSKATGTAVEWVQMVGMKPGPDSIGIIAVSHNCSGVAARACGLVSLEPTKVAEILKDRPSWYRDCRCVDIIHVIPTGNGGTIELIYMQTYAPTTLAAPRDFWTLRYTSGLEDGSLVICERSLTQSTGGPSGPNTPNFIRAEVLPSGYLIRPCEGGGSMIYIVDHVDLDAWSVPEVLRPLYESPKILAQKMTIAALRHIRQIAHESSGEIPYGAGRQPAVFRTFSQRLSRGFNDAVSGFPDDGWSLLSSDGSEDITISVNSSPNKLVGSHVSPNPLFSTVGGGILCAKASMLLQNVPPALLVRFLREHRSEWADPGVDAYSAASLRASPYAVPGLRTSGFMGSQVILPLAHTLEHEEFLEVIRLEGHGFSHDEVLLSRDMYLLQLCSGVDENATSASAQLVFAPIDESFADDAPLLPSGFRVIPLDTKMDGPSATRTLDLASALEVGPGGASRASVEASGTCNRSVLTIAFQFSYENHLRESVAAMARSYVRAVMASVQRVAVAIAPSRLGPQIGMKHPPASPEALTLASWIGRSYRAHTGADIRWSDTEDADSPLALLWKHSDAILCCSLKPAPMFTFANNAGLDILETTLVNLQDISLEMILDDEGRKALCSEFPKIMQQGFTYLPGGVCKSSMGRQASYEQAVAWKVLSDDDAPHCLAFMLVNWTFM.

The segment at 1-21 (MAAAAVGGRGERLSSSSPTAA) is disordered. The homeobox DNA-binding region spans 26–89 (DAGKYVRYTP…NRRCREKQRK (64 aa)). Residues 84 to 126 (REKQRKEASRLQTVNRKLNAMNKLLMEENDRLQKQVSRLVYEN) are a coiled coil. One can recognise an START domain in the interval 168-390 (DANNPAGLLA…LRHIRQIAHE (223 aa)).

It belongs to the HD-ZIP homeobox family. Class III subfamily. In terms of tissue distribution, expressed in seedlings, roots, stems, leaf sheaths and blades and panicles.

The protein localises to the nucleus. Its function is as follows. Probable transcription factor. In Oryza sativa subsp. indica (Rice), this protein is Homeobox-leucine zipper protein HOX33 (HOX33).